The primary structure comprises 486 residues: Cardiolipin synthase A (486 aa).

The next 2 membrane-spanning stretches (helical) occupy residues 3–23 and 38–58; these read TFYT…IAGV and MAWL…YLSV. 2 PLD phosphodiesterase domains span residues 219–246 and 399–426; these read MDLR…VDPR and EGGL…DMRS. Active-site residues include His-224, Lys-226, Asp-231, His-404, Lys-406, and Asp-411.

The protein belongs to the phospholipase D family. Cardiolipin synthase subfamily. ClsA sub-subfamily.

It is found in the cell inner membrane. The catalysed reaction is 2 a 1,2-diacyl-sn-glycero-3-phospho-(1'-sn-glycerol) = a cardiolipin + glycerol. Functionally, catalyzes the reversible phosphatidyl group transfer from one phosphatidylglycerol molecule to another to form cardiolipin (CL) (diphosphatidylglycerol) and glycerol. This is Cardiolipin synthase A from Salmonella arizonae (strain ATCC BAA-731 / CDC346-86 / RSK2980).